A 195-amino-acid polypeptide reads, in one-letter code: Killer cell lectin-like receptor subfamily G member 1 (195 aa).

Residues 1-38 are Cytoplasmic-facing; the sequence is MTDSVIYSMLELPTATQAQNDYGPQQKSSSSRPSCSCL. The ITIM motif signature appears at 5 to 10; the sequence is VIYSML. A helical; Signal-anchor for type II membrane protein membrane pass occupies residues 39–59; the sequence is VAIALGLLTAVLLSVLLYQWI. Residues 60–195 lie on the Extracellular side of the membrane; that stretch reads LCQGSNYSTC…KCPFADQALF (136 aa). N-linked (GlcNAc...) asparagine glycosylation is present at Asn65. A disulfide bridge connects residues Cys75 and Cys86. Residues 82–185 enclose the C-type lectin domain; that stretch reads YGNHCYYFSV…CEVPLHWVCK (104 aa). N-linked (GlcNAc...) asparagine glycosylation is found at Asn97, Asn137, and Asn150. Intrachain disulfides connect Cys103–Cys184 and Cys163–Cys176.

Forms a monomer and homodimer; disulfide-linked. Interacts (via ITIM motif) with PTPN11 and INPP5D. In terms of tissue distribution, expressed specifically on natural killer (NK) cells and T-cells, mainly CD8 T-cells.

Its subcellular location is the cell membrane. Plays an inhibitory role on natural killer (NK) cells and T-cell functions upon binding to their non-MHC ligands. May mediate missing self recognition by binding to a highly conserved site on classical cadherins, enabling it to monitor expression of E-cadherin/CDH1, N-cadherin/CDH2 and R-cadherin/CDH4 on target cells. In Homo sapiens (Human), this protein is Killer cell lectin-like receptor subfamily G member 1 (KLRG1).